Consider the following 320-residue polypeptide: Ferrochelatase (320 aa).

Positions 194 and 275 each coordinate Fe cation.

This sequence belongs to the ferrochelatase family. As to quaternary structure, monomer.

The protein resides in the cytoplasm. It carries out the reaction heme b + 2 H(+) = protoporphyrin IX + Fe(2+). It functions in the pathway porphyrin-containing compound metabolism; protoheme biosynthesis; protoheme from protoporphyrin-IX: step 1/1. Its function is as follows. Catalyzes the ferrous insertion into protoporphyrin IX. The sequence is that of Ferrochelatase from Escherichia coli (strain SMS-3-5 / SECEC).